The primary structure comprises 257 residues: 1-acyl-sn-glycerol-3-phosphate acyltransferase (257 aa).

A helical transmembrane segment spans residues 10 to 30; it reads VLFYLLLSASAFVWGTLSFFI. Positions 82 to 87 match the HXXXXD motif motif; it reads HQSTWE. Residues 105–125 form a helical membrane-spanning segment; that stretch reads ELLYVPFFGWALALLKPIAID.

The protein belongs to the 1-acyl-sn-glycerol-3-phosphate acyltransferase family.

The protein resides in the cell inner membrane. It carries out the reaction a 1-acyl-sn-glycero-3-phosphate + an acyl-CoA = a 1,2-diacyl-sn-glycero-3-phosphate + CoA. Its pathway is phospholipid metabolism; CDP-diacylglycerol biosynthesis; CDP-diacylglycerol from sn-glycerol 3-phosphate: step 2/3. Converts lysophosphatidic acid (LPA) into phosphatidic acid by incorporating acyl moiety at the 2 position. The polypeptide is 1-acyl-sn-glycerol-3-phosphate acyltransferase (Pseudomonas aeruginosa (strain ATCC 15692 / DSM 22644 / CIP 104116 / JCM 14847 / LMG 12228 / 1C / PRS 101 / PAO1)).